Here is a 493-residue protein sequence, read N- to C-terminus: Proline--tRNA ligase (493 aa).

It belongs to the class-II aminoacyl-tRNA synthetase family. ProS type 3 subfamily. In terms of assembly, homodimer.

The protein localises to the cytoplasm. It catalyses the reaction tRNA(Pro) + L-proline + ATP = L-prolyl-tRNA(Pro) + AMP + diphosphate. Functionally, catalyzes the attachment of proline to tRNA(Pro) in a two-step reaction: proline is first activated by ATP to form Pro-AMP and then transferred to the acceptor end of tRNA(Pro). The protein is Proline--tRNA ligase of Parabacteroides distasonis (strain ATCC 8503 / DSM 20701 / CIP 104284 / JCM 5825 / NCTC 11152).